A 1442-amino-acid polypeptide reads, in one-letter code: ABC transporter G family member 11 (1442 aa).

In terms of domain architecture, ABC transporter 1 spans 125–373; that stretch reads LFTPSFWTKK…FMSLGFDCEP (249 aa). Positions 478 to 718 constitute an ABC transmembrane type-2 1 domain; that stretch reads LNDKFGMYSK…EQGSLYFKGD (241 aa). A run of 6 helical transmembrane segments spans residues 482–502, 518–538, 567–587, 592–612, 627–647, and 737–757; these read FGMY…ASLF, AILS…AMTF, IPFT…MFGL, GKFF…TALF, NISN…IPIP, and IIVY…MEYI. Residues 808–1052 form the ABC transporter 2 domain; it reads FTWQNIRYTV…LTSYFERHGV (245 aa). An ATP-binding site is contributed by 844–851; the sequence is GSSGAGKT. Positions 1144 to 1369 constitute an ABC transmembrane type-2 2 domain; sequence YYTYGSFVQA…YNTCQNYTSA (226 aa). A run of 6 helical transmembrane segments spans residues 1147–1167, 1181–1201, 1220–1240, 1259–1279, 1286–1306, and 1416–1436; these read YGSF…FWNL, IFEA…QLII, FAIS…TIFF, FYFW…GQAV, MFFA…FCGV, and VGII…FVYL.

Belongs to the ABC transporter superfamily. ABCG family. PDR (TC 3.A.1.205) subfamily.

The protein resides in the membrane. This is ABC transporter G family member 11 (abcG11) from Dictyostelium discoideum (Social amoeba).